We begin with the raw amino-acid sequence, 483 residues long: Regulatory protein ViaA (483 aa).

The protein belongs to the ViaA family. As to quaternary structure, homodimer. Interacts with RavA.

The protein localises to the cytoplasm. Its function is as follows. Component of the RavA-ViaA chaperone complex, which may act on the membrane to optimize the function of some of the respiratory chains. ViaA stimulates the ATPase activity of RavA. The protein is Regulatory protein ViaA of Escherichia coli (strain 55989 / EAEC).